The primary structure comprises 351 residues: Phosphoribosylformylglycinamidine cyclo-ligase (351 aa).

The protein belongs to the AIR synthase family.

The protein localises to the cytoplasm. It carries out the reaction 2-formamido-N(1)-(5-O-phospho-beta-D-ribosyl)acetamidine + ATP = 5-amino-1-(5-phospho-beta-D-ribosyl)imidazole + ADP + phosphate + H(+). It participates in purine metabolism; IMP biosynthesis via de novo pathway; 5-amino-1-(5-phospho-D-ribosyl)imidazole from N(2)-formyl-N(1)-(5-phospho-D-ribosyl)glycinamide: step 2/2. This Burkholderia pseudomallei (strain 668) protein is Phosphoribosylformylglycinamidine cyclo-ligase.